The sequence spans 250 residues: 2,3-bisphosphoglycerate-dependent phosphoglycerate mutase (250 aa).

Substrate is bound by residues 8–15, 21–22, Arg60, 87–90, Lys98, 114–115, and 183–184; these read RHGESQWN, TG, ERHY, RR, and GN. The active-site Tele-phosphohistidine intermediate is His9. Glu87 (proton donor/acceptor) is an active-site residue.

This sequence belongs to the phosphoglycerate mutase family. BPG-dependent PGAM subfamily. As to quaternary structure, homodimer.

The enzyme catalyses (2R)-2-phosphoglycerate = (2R)-3-phosphoglycerate. It participates in carbohydrate degradation; glycolysis; pyruvate from D-glyceraldehyde 3-phosphate: step 3/5. Functionally, catalyzes the interconversion of 2-phosphoglycerate and 3-phosphoglycerate. The protein is 2,3-bisphosphoglycerate-dependent phosphoglycerate mutase of Bordetella petrii (strain ATCC BAA-461 / DSM 12804 / CCUG 43448).